Consider the following 563-residue polypeptide: Delta-1-pyrroline-5-carboxylate dehydrogenase, mitochondrial (563 aa).

The N-terminal 24 residues, 1 to 24 (MLLRSAALCRALLARRGRAAGLCR), are a transit peptide targeting the mitochondrion. Ser44 is modified (phosphoserine). At Lys52 the chain carries N6-acetyllysine. 5 positions are modified to N6-acetyllysine; alternate: Lys93, Lys99, Lys114, Lys130, and Lys175. N6-succinyllysine; alternate is present on residues Lys93, Lys99, Lys114, Lys130, and Lys175. NAD(+) contacts are provided by residues Ser208, Lys233, and 286–290 (GSVPT). Glu314 acts as the Proton acceptor in catalysis. Lys318 is subject to N6-acetyllysine. An N6-succinyllysine modification is found at Lys347. The active-site Nucleophile is Cys348. Lys365 and Lys376 each carry N6-acetyllysine. N6-succinyllysine is present on Lys395. Position 447 (Glu447) interacts with NAD(+). Residue Lys509 is modified to N6-acetyllysine; alternate. Lys509 bears the N6-succinyllysine; alternate mark. Residue Ser513 coordinates substrate. Lys531 carries the N6-acetyllysine modification.

It belongs to the aldehyde dehydrogenase family. In terms of assembly, homodimer.

Its subcellular location is the mitochondrion matrix. It carries out the reaction L-glutamate 5-semialdehyde + NAD(+) + H2O = L-glutamate + NADH + 2 H(+). Its pathway is amino-acid degradation; L-proline degradation into L-glutamate; L-glutamate from L-proline: step 2/2. Functionally, irreversible conversion of delta-1-pyrroline-5-carboxylate (P5C), derived either from proline or ornithine, to glutamate. This is a necessary step in the pathway interconnecting the urea and tricarboxylic acid cycles. The preferred substrate is glutamic gamma-semialdehyde, other substrates include succinic, glutaric and adipic semialdehydes. The chain is Delta-1-pyrroline-5-carboxylate dehydrogenase, mitochondrial (ALDH4A1) from Bos taurus (Bovine).